The sequence spans 314 residues: 3'-5' exoribonuclease YhaM (314 aa).

Positions 163–279 (HVVSMLDLAK…LHYIDNLDAK (117 aa)) constitute an HD domain.

The protein belongs to the YhaM family.

Shows a 3'-5' exoribonuclease activity. The polypeptide is 3'-5' exoribonuclease YhaM (Bacillus cereus (strain 03BB102)).